Here is a 669-residue protein sequence, read N- to C-terminus: Soluble guanylate cyclase 89Db (669 aa).

His-104 contributes to the heme binding site. The stretch at 430–458 (QHCSKLEIMFEKEEQRSDELEKSLELADS) forms a coiled coil. Positions 494–620 (SVIFIEVMNI…DTVNTASRME (127 aa)) constitute a Guanylate cyclase domain.

The protein belongs to the adenylyl cyclase class-4/guanylyl cyclase family. As to quaternary structure, heterodimer; with Gyc88E, in the presence of magnesium or manganese. The cofactor is heme. As to expression, expressed in embryos in a segmental pattern in the ventral nerve cord (VNC) and in the brain, beginning at stage 13 and continuing through to stage 17. Colocalized with Gyc-89Db in several peripheral neurons that innervate trachea, basiconical sensilla and the sensory cones in the posterior segments of the embryo. Expression in wandering 3rd instar larvae is most prominent in a small cluster of cells located in the anterior medial region of each brain lobe. In the VNC, expression is found in scattered cells both laterally and at the midline.

It localises to the cytoplasm. It catalyses the reaction GTP = 3',5'-cyclic GMP + diphosphate. Its activity is regulated as follows. Probably not activated by nitric oxide (NO). Heterodimer exhibits some stimulation, compounds (SIN-1 and two of the NONOates) that were ineffective at stimulating Gyc-88E homodimer did stimulate the heterodimer. Heterodimers with Gyc88E are activated in response to changing oxygen concentrations, alerting flies to hypoxic environments. Under normal oxygen concentrations, oxygen binds to the heme group and results in low levels of guanylyl cyclase activity. When exposed to reduced oxygen concentrations, the oxygen dissociates from the heme group resulting in activation of the enzyme. This Drosophila melanogaster (Fruit fly) protein is Soluble guanylate cyclase 89Db.